The primary structure comprises 271 residues: Formamidopyrimidine-DNA glycosylase (271 aa).

Pro-2 functions as the Schiff-base intermediate with DNA in the catalytic mechanism. Glu-3 serves as the catalytic Proton donor. Catalysis depends on Lys-57, which acts as the Proton donor; for beta-elimination activity. Positions 90, 109, and 151 each coordinate DNA. The segment at 236-270 (HVYGRGGETCTQCGNLLSEIRLGQRTTVFCSICQP) adopts an FPG-type zinc-finger fold. Residue Arg-260 is the Proton donor; for delta-elimination activity of the active site.

This sequence belongs to the FPG family. As to quaternary structure, monomer. Requires Zn(2+) as cofactor.

It carries out the reaction Hydrolysis of DNA containing ring-opened 7-methylguanine residues, releasing 2,6-diamino-4-hydroxy-5-(N-methyl)formamidopyrimidine.. It catalyses the reaction 2'-deoxyribonucleotide-(2'-deoxyribose 5'-phosphate)-2'-deoxyribonucleotide-DNA = a 3'-end 2'-deoxyribonucleotide-(2,3-dehydro-2,3-deoxyribose 5'-phosphate)-DNA + a 5'-end 5'-phospho-2'-deoxyribonucleoside-DNA + H(+). In terms of biological role, involved in base excision repair of DNA damaged by oxidation or by mutagenic agents. Acts as a DNA glycosylase that recognizes and removes damaged bases. Has a preference for oxidized purines, such as 7,8-dihydro-8-oxoguanine (8-oxoG). Has AP (apurinic/apyrimidinic) lyase activity and introduces nicks in the DNA strand. Cleaves the DNA backbone by beta-delta elimination to generate a single-strand break at the site of the removed base with both 3'- and 5'-phosphates. This chain is Formamidopyrimidine-DNA glycosylase, found in Shewanella oneidensis (strain ATCC 700550 / JCM 31522 / CIP 106686 / LMG 19005 / NCIMB 14063 / MR-1).